The chain runs to 263 residues: uncharacterized protein (263 aa).

ATP is bound at residue 31 to 38 (GPTGSGKT).

This sequence belongs to the CbbQ/NirQ/NorQ/GpvN family.

This is an uncharacterized protein from Staphylococcus epidermidis (strain ATCC 12228 / FDA PCI 1200).